Here is a 344-residue protein sequence, read N- to C-terminus: GPALPP motifs-containing protein 1 (344 aa).

The tract at residues 1-309 is disordered; it reads MARDLIGPAL…QERIPFDRDK (309 aa). N-acetylalanine is present on A2. The GPALPP motif 1 motif lies at 7 to 12; the sequence is GPALPP. Position 28 is a phosphoserine (S28). Positions 30–35 match the GPALPP motif 2 motif; it reads GPALPP. Acidic residues-rich tracts occupy residues 58 to 67 and 80 to 93; these read GNQESEEDDT and DDND…DDDG. The short motif at 96–101 is the GPALPP motif 3 element; sequence GPALPP. At S109 the chain carries Phosphoserine. Pro residues predominate over residues 111–120; that stretch reads PRPIIGPALP. The GPALPP motif 4 motif lies at 116–121; sequence GPALPP. The span at 128 to 137 shows a compositional bias: basic and acidic residues; sequence QKSDKGRDDP. T142 is subject to Phosphothreonine. S144 and S145 each carry phosphoserine. Composition is skewed to basic and acidic residues over residues 167 to 191, 231 to 265, 273 to 283, and 291 to 309; these read EFEK…KPIV, PADR…KRLA, ESKRSESLMDI, and KAAE…DRDK. K275 is covalently cross-linked (Glycyl lysine isopeptide (Lys-Gly) (interchain with G-Cter in SUMO2)). Residue K312 forms a Glycyl lysine isopeptide (Lys-Gly) (interchain with G-Cter in SUMO2) linkage.

The polypeptide is GPALPP motifs-containing protein 1 (GPALPP1) (Pongo abelii (Sumatran orangutan)).